The chain runs to 255 residues: uncharacterized protein (255 aa).

The protein belongs to the methyltransferase superfamily.

This is an uncharacterized protein from Bacillus subtilis (strain 168).